The primary structure comprises 1373 residues: Insulin-like growth factor 1 receptor (1373 aa).

The first 30 residues, 1 to 30, serve as a signal peptide directing secretion; that stretch reads MKSGSGGGSPTSLWGLVFLSAALSLWPTSG. A disulfide bridge connects residues C33 and C52. N51, N102, and N135 each carry an N-linked (GlcNAc...) asparagine glycan. 13 disulfides stabilise this stretch: C150-C178, C182-C205, C192-C211, C215-C224, C219-C230, C231-C239, C235-C248, C251-C260, C264-C276, C282-C303, C307-C321, C324-C328, and C332-C354. N245 carries an N-linked (GlcNAc...) asparagine glycan. The N-linked (GlcNAc...) asparagine glycan is linked to N314. N-linked (GlcNAc...) asparagine glycans are attached at residues N418 and N439. A disulfide bond links C456 and C489. Fibronectin type-III domains are found at residues 490 to 610, 611 to 709, 735 to 829, and 835 to 928; these read ESDV…TNAS, VPSI…TEAE, RPER…TMPA, and IPGP…VPAK. N-linked (GlcNAc...) asparagine glycosylation is found at N535, N608, N623, N641, N748, N757, N765, N901, and N914. The Extracellular segment spans residues 742 to 936; sequence DVMQVANTTM…AKTTYENFMH (195 aa). A helical transmembrane segment spans residues 937 to 960; that stretch reads LIIALPVAILLIVGGLVIMLYVFH. Residues 961-1373 are Cytoplasmic-facing; sequence RKRNNSRLGN…ALPLPQSSTC (413 aa). An IRS1- and SHC1-binding motif is present at residues 978-981; that stretch reads NPEY. Y981 carries the phosphotyrosine modification. Residues 1000–1276 form the Protein kinase domain; the sequence is ITMNRELGQG…SIKDEMEPSF (277 aa). Residues 1006–1014 and K1034 each bind ATP; that span reads LGQGSFGMV. Residue D1137 is the Proton acceptor of the active site. Phosphotyrosine; by autocatalysis occurs at positions 1163, 1167, and 1168. Glycyl lysine isopeptide (Lys-Gly) (interchain with G-Cter in ubiquitin) cross-links involve residues K1170 and K1173. S1280 is subject to Phosphoserine; by GSK3-beta. The segment at 1283–1373 is disordered; that stretch reads YSEENKPPEP…ALPLPQSSTC (91 aa). S1284 carries the post-translational modification Phosphoserine. The segment covering 1292-1305 has biased composition (acidic residues); it reads PEELEMELEMEPEN. Residues 1306–1322 show a composition bias toward low complexity; it reads MESVPLDPSASSASLPL. Positions 1323 to 1332 are enriched in basic and acidic residues; that stretch reads PERHSGHKAE.

Belongs to the protein kinase superfamily. Tyr protein kinase family. Insulin receptor subfamily. Tetramer of 2 alpha and 2 beta chains linked by disulfide bonds. The alpha chains contribute to the formation of the ligand-binding domain, while the beta chain carries the kinase domain. Interacts with PIK3R1 and with the PTB/PID domains of IRS1 and SHC1 in vitro when autophosphorylated on tyrosine residues. Forms a hybrid receptor with INSR, the hybrid is a tetramer consisting of 1 alpha chain and 1 beta chain of INSR and 1 alpha chain and 1 beta chain of IGF1R. Interacts with ARRB1 and ARRB2. Interacts with GRB10. Interacts with RACK1. Interacts with SOCS1, SOCS2 and SOCS3. Interacts with 14-3-3 proteins. Interacts with NMD2. Interacts with MAP3K5. Interacts with STAT3. Found in a ternary complex with IGF1 and ITGAV:ITGB3 or ITGA6:ITGB4. Interacts (nascent precursor form) with ZFAND2B. In terms of processing, autophosphorylated on tyrosine residues in response to ligand binding. Autophosphorylation occurs in trans, i.e. one subunit of the dimeric receptor phosphorylates tyrosine residues on the other subunit. Autophosphorylation occurs in a sequential manner; Tyr-1167 is predominantly phosphorylated first, followed by phosphorylation of Tyr-1163 and Tyr-1168. While every single phosphorylation increases kinase activity, all three tyrosine residues in the kinase activation loop (Tyr-1163, Tyr-1167 and Tyr-1168) have to be phosphorylated for optimal activity. Can be autophosphorylated at additional tyrosine residues (in vitro). Autophosphorylated is followed by phosphorylation of juxtamembrane tyrosines and C-terminal serines. May also be phosphorylated at Tyr-1163 and Tyr-1168 by mTORC2. Phosphorylation of Tyr-981 is required for IRS1- and SHC1-binding. Phosphorylation of Ser-1280 by GSK-3beta restrains kinase activity and promotes cell surface expression, it requires a priming phosphorylation at Ser-1284. Dephosphorylated by PTPN1. Post-translationally, polyubiquitinated at Lys-1170 and Lys-1173 through both 'Lys-48' and 'Lys-29' linkages, promoting receptor endocytosis and subsequent degradation by the proteasome. Ubiquitination is facilitated by pre-existing phosphorylation. Sumoylated with SUMO1. In terms of processing, controlled by regulated intramembrane proteolysis (RIP). Undergoes metalloprotease-dependent constitutive ectodomain shedding to produce a membrane-anchored 52 kDa C-Terminal fragment which is further processed by presenilin gamma-secretase to yield an intracellular 50 kDa fragment.

It is found in the cell membrane. It carries out the reaction L-tyrosyl-[protein] + ATP = O-phospho-L-tyrosyl-[protein] + ADP + H(+). With respect to regulation, activated by autophosphorylation at Tyr-1163, Tyr-1167 and Tyr-1168 on the kinase activation loop; phosphorylation at all three tyrosine residues is required for optimal kinase activity. Inhibited by MSC1609119A-1, BMS-754807, PQIP, benzimidazole pyridinone, isoquinolinedione, bis-azaindole, 3-cyanoquinoline, 2,4-bis-arylamino-1,3-pyrimidine, pyrrolopyrimidine, pyrrole-5-carboxaldehyde, picropodophyllin (PPP), tyrphostin derivatives. While most inhibitors bind to the ATP binding pocket, MSC1609119A-1 functions as allosteric inhibitor and binds close to the DFG motif and the activation loop. Functionally, receptor tyrosine kinase which mediates actions of insulin-like growth factor 1 (IGF1). Binds IGF1 with high affinity and IGF2 and insulin (INS) with a lower affinity. The activated IGF1R is involved in cell growth and survival control. IGF1R is crucial for tumor transformation and survival of malignant cell. Ligand binding activates the receptor kinase, leading to receptor autophosphorylation, and tyrosines phosphorylation of multiple substrates, that function as signaling adapter proteins including, the insulin-receptor substrates (IRS1/2), Shc and 14-3-3 proteins. Phosphorylation of IRSs proteins lead to the activation of two main signaling pathways: the PI3K-AKT/PKB pathway and the Ras-MAPK pathway. The result of activating the MAPK pathway is increased cellular proliferation, whereas activating the PI3K pathway inhibits apoptosis and stimulates protein synthesis. Phosphorylated IRS1 can activate the 85 kDa regulatory subunit of PI3K (PIK3R1), leading to activation of several downstream substrates, including protein AKT/PKB. AKT phosphorylation, in turn, enhances protein synthesis through mTOR activation and triggers the antiapoptotic effects of IGFIR through phosphorylation and inactivation of BAD. In parallel to PI3K-driven signaling, recruitment of Grb2/SOS by phosphorylated IRS1 or Shc leads to recruitment of Ras and activation of the ras-MAPK pathway. In addition to these two main signaling pathways IGF1R signals also through the Janus kinase/signal transducer and activator of transcription pathway (JAK/STAT). Phosphorylation of JAK proteins can lead to phosphorylation/activation of signal transducers and activators of transcription (STAT) proteins. In particular activation of STAT3, may be essential for the transforming activity of IGF1R. The JAK/STAT pathway activates gene transcription and may be responsible for the transforming activity. JNK kinases can also be activated by the IGF1R. IGF1 exerts inhibiting activities on JNK activation via phosphorylation and inhibition of MAP3K5/ASK1, which is able to directly associate with the IGF1R. When present in a hybrid receptor with INSR, binds IGF1. The polypeptide is Insulin-like growth factor 1 receptor (Igf1r) (Mus musculus (Mouse)).